The sequence spans 296 residues: MESMAVATDGGERPGVPAGSGLSASQRRAELRRRKLLMNSEQRINRIMGFHRPGSGAEEESQTKSKQQDSDKLNSLSVPSVSKRVVLGDSVSTGTTDQQGGVAEVKGTQLGDKLDSFIKPPECSSDVNLELRQRNRGDLTADSVQRGSRHGLEQYLSRFEEAMKLRKQLISEKPSQEDGNTTEEFDSFRIFRLVGCALLALGVRAFVCKYLSIFAPFLTLQLAYMGLYKYFPKSEKKIKTTVLTAALLLSGIPAEVINRSMDTYSKMGEVFTDLCVYFFTFIFCHELLDYWGSEVP.

Residues 1-79 are disordered; that stretch reads MESMAVATDG…SDKLNSLSVP (79 aa). The Cytoplasmic segment spans residues 1-189; it reads MESMAVATDG…NTTEEFDSFR (189 aa). Ser55 is subject to Phosphoserine. The span at 61 to 72 shows a compositional bias: basic and acidic residues; it reads SQTKSKQQDSDK. The chain crosses the membrane as a helical span at residues 190–207; the sequence is IFRLVGCALLALGVRAFV. Over 208 to 212 the chain is Lumenal; the sequence is CKYLS. A disulfide bridge links Cys208 with Cys284. A helical membrane pass occupies residues 213 to 231; sequence IFAPFLTLQLAYMGLYKYF. Residues 232–269 are Cytoplasmic-facing; sequence PKSEKKIKTTVLTAALLLSGIPAEVINRSMDTYSKMGE. Residues 270 to 288 traverse the membrane as a helical segment; sequence VFTDLCVYFFTFIFCHELL. Residues 289 to 296 are Lumenal-facing; the sequence is DYWGSEVP.

Component of the Golgi to ER traffic (GET) complex, which is composed of GET1/WRB, CAMLG/GET2 and GET3/TRC40. Within the complex, GET1 and CAMLG form a heterotetramer which is stabilized by phosphatidylinositol binding and which binds to the GET3 homodimer. Interacts (via C-terminus) with GET1. Interacts (via N-terminus) with GET3. GET3 shows a higher affinity for CAMLG than for GET1. Interacts (via N-terminus) with TNFRSF13B/TACI (via C-terminus). As to quaternary structure, (Microbial infection) Interacts with human herpes virus 8/HHV-8 protein K7; this interaction modulates intracellular calcium concentration. In terms of tissue distribution, ubiquitous. Highest levels in brain, testis and ovary.

It is found in the endoplasmic reticulum membrane. Functionally, required for the post-translational delivery of tail-anchored (TA) proteins to the endoplasmic reticulum. Together with GET1/WRB, acts as a membrane receptor for soluble GET3/TRC40, which recognizes and selectively binds the transmembrane domain of TA proteins in the cytosol. Required for the stability of GET1. Stimulates calcium signaling in T cells through its involvement in elevation of intracellular calcium. Essential for the survival of peripheral follicular B cells. This is Guided entry of tail-anchored proteins factor CAMLG from Homo sapiens (Human).